The sequence spans 266 residues: MKLVIDAGNTNIVFAVHDGSRWRGTWRIATDAQRTSDEYGVWLTVLLDRAGIAAGGIDGAVIGTVVPAALYHLRRLCRDWFSLEPLIARAELDWGFAIEMDNPAEIGADRLLNALAAHHGYGGPLIVIDFGTATTFDVVNGNGAYVGGVIAPGINLSVEALHQAAARLPRIGIGRPQLVIGKSTIPAMRSGIYWGYVGLVEGLIARIEADFGAPMKTIATGGLAPLIAEGTSRIEHTDPDLTLEGLRLLALRNPAPVLRPREAEHE.

6 to 13 is an ATP binding site; it reads DAGNTNIV. 107-110 provides a ligand contact to substrate; the sequence is GADR. D109 (proton acceptor) is an active-site residue. D129 contributes to the K(+) binding site. T132 is an ATP binding site. Residue T184 participates in substrate binding.

This sequence belongs to the type III pantothenate kinase family. In terms of assembly, homodimer. Requires NH4(+) as cofactor. It depends on K(+) as a cofactor.

It localises to the cytoplasm. It carries out the reaction (R)-pantothenate + ATP = (R)-4'-phosphopantothenate + ADP + H(+). It participates in cofactor biosynthesis; coenzyme A biosynthesis; CoA from (R)-pantothenate: step 1/5. In terms of biological role, catalyzes the phosphorylation of pantothenate (Pan), the first step in CoA biosynthesis. This Acidiphilium cryptum (strain JF-5) protein is Type III pantothenate kinase.